Here is a 229-residue protein sequence, read N- to C-terminus: Uracil-DNA glycosylase (229 aa).

D67 serves as the catalytic Proton acceptor.

It belongs to the uracil-DNA glycosylase (UDG) superfamily. UNG family.

It is found in the cytoplasm. It catalyses the reaction Hydrolyzes single-stranded DNA or mismatched double-stranded DNA and polynucleotides, releasing free uracil.. Its function is as follows. Excises uracil residues from the DNA which can arise as a result of misincorporation of dUMP residues by DNA polymerase or due to deamination of cytosine. In Coxiella burnetii (strain CbuK_Q154) (Coxiella burnetii (strain Q154)), this protein is Uracil-DNA glycosylase.